The following is a 295-amino-acid chain: Ribosomal protein L11 methyltransferase (295 aa).

S-adenosyl-L-methionine contacts are provided by Thr145, Gly166, Asp188, and Asn230.

This sequence belongs to the methyltransferase superfamily. PrmA family.

It is found in the cytoplasm. The catalysed reaction is L-lysyl-[protein] + 3 S-adenosyl-L-methionine = N(6),N(6),N(6)-trimethyl-L-lysyl-[protein] + 3 S-adenosyl-L-homocysteine + 3 H(+). Methylates ribosomal protein L11. This is Ribosomal protein L11 methyltransferase from Pectobacterium carotovorum subsp. carotovorum (strain PC1).